Here is a 350-residue protein sequence, read N- to C-terminus: Beta-ketoacyl-[acyl-carrier-protein] synthase III (350 aa).

Catalysis depends on residues C120 and H256. An ACP-binding region spans residues 257 to 261 (QANVR). Residue N286 is part of the active site.

It belongs to the thiolase-like superfamily. FabH family. In terms of assembly, homodimer.

The protein localises to the cytoplasm. It catalyses the reaction malonyl-[ACP] + acetyl-CoA + H(+) = 3-oxobutanoyl-[ACP] + CO2 + CoA. It participates in lipid metabolism; fatty acid biosynthesis. Its function is as follows. Catalyzes the condensation reaction of fatty acid synthesis by the addition to an acyl acceptor of two carbons from malonyl-ACP. Catalyzes the first condensation reaction which initiates fatty acid synthesis and may therefore play a role in governing the total rate of fatty acid production. Possesses both acetoacetyl-ACP synthase and acetyl transacylase activities. Its substrate specificity determines the biosynthesis of branched-chain and/or straight-chain of fatty acids. This is Beta-ketoacyl-[acyl-carrier-protein] synthase III from Deinococcus deserti (strain DSM 17065 / CIP 109153 / LMG 22923 / VCD115).